The following is a 360-amino-acid chain: Probable neutral protease 2 homolog MCYG_04257 (360 aa).

The N-terminal stretch at 1-17 (MQLIAFLAALGVPVAFA) is a signal peptide. Positions 18–182 (ATIPSVPLNH…KVKAGSIDKR (165 aa)) are excised as a propeptide. The cysteines at positions 190 and 261 are disulfide-linked. Asparagine 262 carries an N-linked (GlcNAc...) asparagine glycan. 2 disulfides stabilise this stretch: cysteine 268–cysteine 286 and cysteine 300–cysteine 360. Histidine 311 is a Zn(2+) binding site. Glutamate 312 is an active-site residue. Zn(2+)-binding residues include histidine 315 and aspartate 326.

Belongs to the peptidase M35 family. It depends on Zn(2+) as a cofactor.

The protein resides in the secreted. The catalysed reaction is Preferential cleavage of bonds with hydrophobic residues in P1'. Also 3-Asn-|-Gln-4 and 8-Gly-|-Ser-9 bonds in insulin B chain.. Functionally, probable secreted metalloprotease that shows high activities on basic nuclear substrates such as histone and protamine. May be involved in virulence. The polypeptide is Probable neutral protease 2 homolog MCYG_04257 (Arthroderma otae (strain ATCC MYA-4605 / CBS 113480) (Microsporum canis)).